The following is an 87-amino-acid chain: Putative regulatory protein BH2513 (87 aa).

Belongs to the RemA family.

This Halalkalibacterium halodurans (strain ATCC BAA-125 / DSM 18197 / FERM 7344 / JCM 9153 / C-125) (Bacillus halodurans) protein is Putative regulatory protein BH2513.